Here is a 239-residue protein sequence, read N- to C-terminus: Small ribosomal subunit protein eS6B (239 aa).

Phosphoserine is present on residues Ser-148, Ser-235, and Ser-236.

It belongs to the eukaryotic ribosomal protein eS6 family. In terms of assembly, component of the small ribosomal subunit (SSU). Mature yeast ribosomes consist of a small (40S) and a large (60S) subunit. The 40S small subunit contains 1 molecule of ribosomal RNA (18S rRNA) and at least 33 different proteins. The large 60S subunit contains 3 rRNA molecules (25S, 5.8S and 5S rRNA) and at least 46 different proteins. Interacts with snoRNA U3. uS11 interacts with MPP10. Component of the ribosomal small subunit (SSU) processome composed of at least 40 protein subunits and snoRNA U3.

It is found in the cytoplasm. In terms of biological role, component of the ribosome, a large ribonucleoprotein complex responsible for the synthesis of proteins in the cell. The small ribosomal subunit (SSU) binds messenger RNAs (mRNAs) and translates the encoded message by selecting cognate aminoacyl-transfer RNA (tRNA) molecules. The large subunit (LSU) contains the ribosomal catalytic site termed the peptidyl transferase center (PTC), which catalyzes the formation of peptide bonds, thereby polymerizing the amino acids delivered by tRNAs into a polypeptide chain. The nascent polypeptides leave the ribosome through a tunnel in the LSU and interact with protein factors that function in enzymatic processing, targeting, and the membrane insertion of nascent chains at the exit of the ribosomal tunnel. eS6 is involved in nucleolar processing of pre-18S ribosomal RNA and ribosome assembly. The chain is Small ribosomal subunit protein eS6B (rps602) from Schizosaccharomyces pombe (strain 972 / ATCC 24843) (Fission yeast).